The chain runs to 142 residues: Large ribosomal subunit protein uL13 (142 aa).

Belongs to the universal ribosomal protein uL13 family. In terms of assembly, part of the 50S ribosomal subunit.

Its function is as follows. This protein is one of the early assembly proteins of the 50S ribosomal subunit, although it is not seen to bind rRNA by itself. It is important during the early stages of 50S assembly. The sequence is that of Large ribosomal subunit protein uL13 from Ectopseudomonas mendocina (strain ymp) (Pseudomonas mendocina).